We begin with the raw amino-acid sequence, 71 residues long: UPF0435 protein BLi00816/BL03111 (71 aa).

Belongs to the UPF0435 family.

This Bacillus licheniformis (strain ATCC 14580 / DSM 13 / JCM 2505 / CCUG 7422 / NBRC 12200 / NCIMB 9375 / NCTC 10341 / NRRL NRS-1264 / Gibson 46) protein is UPF0435 protein BLi00816/BL03111.